Consider the following 725-residue polypeptide: Protein ECM27 (725 aa).

12 consecutive transmembrane segments (helical) span residues 21 to 41 (VTFIVPSLFHIIIAFVLLGIC), 119 to 139 (VLGACGIILCIVEGSIFIIMS), 157 to 177 (LLFSLAAMCVMSYVSLMNQVT), 178 to 198 (VLNCLLMAFLYAFYLVVKLTF), 397 to 417 (ISDAIFSIITVPFFIIFKLSC), 439 to 459 (LPIILLFIQSITAPFLLCSIL), 470 to 490 (LVYLFPLILAMALILLLTAFI), 526 to 546 (IQIIFLAIGIINIIIWISLLA), 559 to 579 (ILGLSKAILGLTIFAWGNSVG), 621 to 641 (LNSMGGIGFSGLVSMLFIGAF), 668 to 688 (FIVSCVFIILQIILLLLFFGG), and 704 to 724 (GISMCGLWALATLINILLELF).

The protein belongs to the Ca(2+):cation antiporter (CaCA) (TC 2.A.19) family.

It is found in the membrane. This is Protein ECM27 (ECM27) from Saccharomyces cerevisiae (strain ATCC 204508 / S288c) (Baker's yeast).